The primary structure comprises 336 residues: tRNA dimethylallyltransferase (336 aa).

19–26 (GPTASGKT) contacts ATP. A substrate-binding site is contributed by 21 to 26 (TASGKT).

It belongs to the IPP transferase family. In terms of assembly, monomer. Requires Mg(2+) as cofactor.

The catalysed reaction is adenosine(37) in tRNA + dimethylallyl diphosphate = N(6)-dimethylallyladenosine(37) in tRNA + diphosphate. In terms of biological role, catalyzes the transfer of a dimethylallyl group onto the adenine at position 37 in tRNAs that read codons beginning with uridine, leading to the formation of N6-(dimethylallyl)adenosine (i(6)A). In Bifidobacterium adolescentis (strain ATCC 15703 / DSM 20083 / NCTC 11814 / E194a), this protein is tRNA dimethylallyltransferase.